The following is a 109-amino-acid chain: Small ribosomal subunit protein eS25z (109 aa).

Residues 1 to 36 form a disordered region; that stretch reads MAPKKDKVPPPSSKPAKSGGGKQKKKKWSKGKQKEK. Residues 22–31 are compositionally biased toward basic residues; sequence KQKKKKWSKG.

Belongs to the eukaryotic ribosomal protein eS25 family.

The sequence is that of Small ribosomal subunit protein eS25z (RPS25A) from Arabidopsis thaliana (Mouse-ear cress).